We begin with the raw amino-acid sequence, 224 residues long: Transcription cofactor HES-6 (224 aa).

Residues 1-31 form a disordered region; it reads MAPPAAPGRDRVGREDEDGWETRGDRKARKP. A compositionally biased stretch (basic and acidic residues) spans 8-25; it reads GRDRVGREDEDGWETRGD. Positions 25–77 constitute a bHLH domain; it reads DRKARKPLVEKKRRARINESLQELRLLLAGAEVQAKLENAEVLELTVRRVQGV. An Orange domain is found at 96 to 129; it reads FAAGYIQCMHEVHTFVSTCQAIDATVAAELLNHL. A compositionally biased stretch (low complexity) spans 147 to 161; that stretch reads DALAGPPRAPGRSGW. A disordered region spans residues 147–205; that stretch reads DALAGPPRAPGRSGWPAGGAPGSPIPSPPGPGDDLCSDLEEAPEAELSQAPAEGPDLVP. Positions 181–190 are enriched in acidic residues; the sequence is LCSDLEEAPE. The short motif at 221–224 is the WRPW motif element; the sequence is WRPW.

As to quaternary structure, transcription repression requires formation of a complex with a corepressor protein of the Groucho/TLE family. Interacts with HES1.

The protein localises to the nucleus. Functionally, does not bind DNA itself but suppresses both HES1-mediated N box-dependent transcriptional repression and binding of HES1 to E box sequences. Also suppresses HES1-mediated inhibition of the heterodimer formed by ASCL1/MASH1 and TCF3/E47, allowing ASCL1 and TCF3 to up-regulate transcription in its presence. Promotes cell differentiation. This Homo sapiens (Human) protein is Transcription cofactor HES-6.